The chain runs to 274 residues: Dermonecrotic toxin SdSicTox-betaIIB1biv (274 aa).

His5 is a catalytic residue. Mg(2+) is bound by residues Glu25 and Asp27. His41 acts as the Nucleophile in catalysis. 2 disulfides stabilise this stretch: Cys45-Cys51 and Cys47-Cys190. Asp85 contributes to the Mg(2+) binding site.

This sequence belongs to the arthropod phospholipase D family. Class II subfamily. Requires Mg(2+) as cofactor. In terms of tissue distribution, expressed by the venom gland.

The protein localises to the secreted. It catalyses the reaction an N-(acyl)-sphingosylphosphocholine = an N-(acyl)-sphingosyl-1,3-cyclic phosphate + choline. It carries out the reaction an N-(acyl)-sphingosylphosphoethanolamine = an N-(acyl)-sphingosyl-1,3-cyclic phosphate + ethanolamine. The catalysed reaction is a 1-acyl-sn-glycero-3-phosphocholine = a 1-acyl-sn-glycero-2,3-cyclic phosphate + choline. The enzyme catalyses a 1-acyl-sn-glycero-3-phosphoethanolamine = a 1-acyl-sn-glycero-2,3-cyclic phosphate + ethanolamine. Functionally, dermonecrotic toxins cleave the phosphodiester linkage between the phosphate and headgroup of certain phospholipids (sphingolipid and lysolipid substrates), forming an alcohol (often choline) and a cyclic phosphate. This toxin acts on sphingomyelin (SM). It may also act on ceramide phosphoethanolamine (CPE), lysophosphatidylcholine (LPC) and lysophosphatidylethanolamine (LPE), but not on lysophosphatidylserine (LPS), and lysophosphatidylglycerol (LPG). It acts by transphosphatidylation, releasing exclusively cyclic phosphate products as second products. Induces dermonecrosis, hemolysis, increased vascular permeability, edema, inflammatory response, and platelet aggregation. The polypeptide is Dermonecrotic toxin SdSicTox-betaIIB1biv (Sicarius cf. damarensis (strain GJB-2008) (Six-eyed sand spider)).